Reading from the N-terminus, the 382-residue chain is Bifunctional enzyme IspD/IspF (382 aa).

Residues 1–226 (MTLAVLIVAA…RSTMDNIPDI (226 aa)) are 2-C-methyl-D-erythritol 4-phosphate cytidylyltransferase. The segment at 227–382 (RLGNGYDVHR…ALATATLVRA (156 aa)) is 2-C-methyl-D-erythritol 2,4-cyclodiphosphate synthase. Residues aspartate 233 and histidine 235 each contribute to the a divalent metal cation site. 4-CDP-2-C-methyl-D-erythritol 2-phosphate-binding positions include 233–235 (DVH) and 259–260 (HS). Residue histidine 267 coordinates a divalent metal cation. 4-CDP-2-C-methyl-D-erythritol 2-phosphate contacts are provided by residues 281-283 (DIG), 357-360 (TTSE), phenylalanine 364, and arginine 367.

This sequence in the N-terminal section; belongs to the IspD/TarI cytidylyltransferase family. IspD subfamily. In the C-terminal section; belongs to the IspF family. Requires a divalent metal cation as cofactor.

The catalysed reaction is 2-C-methyl-D-erythritol 4-phosphate + CTP + H(+) = 4-CDP-2-C-methyl-D-erythritol + diphosphate. It carries out the reaction 4-CDP-2-C-methyl-D-erythritol 2-phosphate = 2-C-methyl-D-erythritol 2,4-cyclic diphosphate + CMP. Its pathway is isoprenoid biosynthesis; isopentenyl diphosphate biosynthesis via DXP pathway; isopentenyl diphosphate from 1-deoxy-D-xylulose 5-phosphate: step 2/6. It functions in the pathway isoprenoid biosynthesis; isopentenyl diphosphate biosynthesis via DXP pathway; isopentenyl diphosphate from 1-deoxy-D-xylulose 5-phosphate: step 4/6. Bifunctional enzyme that catalyzes the formation of 4-diphosphocytidyl-2-C-methyl-D-erythritol from CTP and 2-C-methyl-D-erythritol 4-phosphate (MEP) (IspD), and catalyzes the conversion of 4-diphosphocytidyl-2-C-methyl-D-erythritol 2-phosphate (CDP-ME2P) to 2-C-methyl-D-erythritol 2,4-cyclodiphosphate (ME-CPP) with a corresponding release of cytidine 5-monophosphate (CMP) (IspF). This chain is Bifunctional enzyme IspD/IspF, found in Ruegeria sp. (strain TM1040) (Silicibacter sp.).